A 179-amino-acid polypeptide reads, in one-letter code: Ribosome maturation factor RimM (179 aa).

A PRC barrel domain is found at 96–175; that stretch reads KDEYFWFDIE…IITVIGAMDI (80 aa).

This sequence belongs to the RimM family. Binds ribosomal protein uS19.

The protein localises to the cytoplasm. In terms of biological role, an accessory protein needed during the final step in the assembly of 30S ribosomal subunit, possibly for assembly of the head region. Essential for efficient processing of 16S rRNA. May be needed both before and after RbfA during the maturation of 16S rRNA. It has affinity for free ribosomal 30S subunits but not for 70S ribosomes. The chain is Ribosome maturation factor RimM from Sulfurimonas denitrificans (strain ATCC 33889 / DSM 1251) (Thiomicrospira denitrificans (strain ATCC 33889 / DSM 1251)).